Consider the following 175-residue polypeptide: Ribosome maturation factor RimM (175 aa).

One can recognise a PRC barrel domain in the interval 96-172; it reads PDTYYDHQLE…LIEIDPPDGL (77 aa).

Belongs to the RimM family. Binds ribosomal protein uS19.

It localises to the cytoplasm. An accessory protein needed during the final step in the assembly of 30S ribosomal subunit, possibly for assembly of the head region. Essential for efficient processing of 16S rRNA. May be needed both before and after RbfA during the maturation of 16S rRNA. It has affinity for free ribosomal 30S subunits but not for 70S ribosomes. This is Ribosome maturation factor RimM from Mycobacterium avium (strain 104).